Reading from the N-terminus, the 514-residue chain is MSLTEEIKKRRTFAIISHPDAGKTTITEQLLYFGGEIREAGTVKGKKSGTFAKSDWMDIEKQRGISVTSSVMQFDYAGKRVNILDTPGHEDFSEDTYRTLMAVDAAVMVVDSAKGIEAQTKKLFEVVKHRNIPVFTFINKLDRDGREPLELLEELEEVLGIASYPMNWPIGMGRAFEGLYDLHNKRLELYKGDERFASIEDGDQLFANNPFYEQVKEDIELLQEAGNDFSEQAILDGDLTPVFFGSALTNFGVQTFLDTFLEFAPEPHGHKTTEGNVVDPLAKDFSGFVFKIQANMDPKHRDRIAFVRIVSGEFERGMGVNLTRTGKGAKLSNVTQFMAESRENVTNAVAGDIIGVYDTGTYQVGDTLTVGKNKFEFEPLPTFTPEIFMKVSPKNVMKQKSFHKGIEQLVQEGAIQLYKNYQTGEYMLGAVGQLQFEVFKHRMEGEYNAEVVMTPMGKKTVRWISEDDLDQRMSSSRNILAKDRFDQPVFLFENDFALRWFADKYPDVTLEEKM.

The 261-residue stretch at 8–268 folds into the tr-type G domain; that stretch reads KKRRTFAIIS…TFLEFAPEPH (261 aa). GTP is bound by residues 17–24, 85–89, and 139–142; these read SHPDAGKT, DTPGH, and NKLD.

It belongs to the TRAFAC class translation factor GTPase superfamily. Classic translation factor GTPase family. PrfC subfamily.

Its subcellular location is the cytoplasm. Functionally, increases the formation of ribosomal termination complexes and stimulates activities of RF-1 and RF-2. It binds guanine nucleotides and has strong preference for UGA stop codons. It may interact directly with the ribosome. The stimulation of RF-1 and RF-2 is significantly reduced by GTP and GDP, but not by GMP. In Streptococcus pyogenes serotype M1, this protein is Peptide chain release factor 3.